The chain runs to 211 residues: Large ribosomal subunit protein uL4 (211 aa).

Residues 42 to 73 (NNRQGTHSTKDRSEVRGGGIKPWAQKGTGRAR) are disordered.

The protein belongs to the universal ribosomal protein uL4 family. As to quaternary structure, part of the 50S ribosomal subunit.

One of the primary rRNA binding proteins, this protein initially binds near the 5'-end of the 23S rRNA. It is important during the early stages of 50S assembly. It makes multiple contacts with different domains of the 23S rRNA in the assembled 50S subunit and ribosome. Functionally, forms part of the polypeptide exit tunnel. In Leptospira biflexa serovar Patoc (strain Patoc 1 / Ames), this protein is Large ribosomal subunit protein uL4.